A 274-amino-acid polypeptide reads, in one-letter code: Orotidine 5'-phosphate decarboxylase (274 aa).

The Proton donor role is filled by K95.

It belongs to the OMP decarboxylase family. Type 2 subfamily.

The enzyme catalyses orotidine 5'-phosphate + H(+) = UMP + CO2. Its pathway is pyrimidine metabolism; UMP biosynthesis via de novo pathway; UMP from orotate: step 2/2. The sequence is that of Orotidine 5'-phosphate decarboxylase from Variovorax paradoxus (strain S110).